The chain runs to 430 residues: Potassium channel subfamily K member 12 (430 aa).

Topologically, residues 1 to 38 (MSSRSPRPPPRRSRRRLPRPSCCCCCCRRSHLNEDTGR) are cytoplasmic. An ER retention/retrieval signal region spans residues 11–16 (RRSRRR). Residues 39 to 59 (FVLLAALIGLYLVAGATVFSA) traverse the membrane as a helical segment. N-linked (GlcNAc...) asparagine glycosylation occurs at asparagine 78. An intramembrane region (pore-forming) is located at residues 114–134 (WDFPGAFYFVGTVVSTIGFGM). Threonine 129, isoleucine 130, and glycine 131 together coordinate K(+). Residues 129 to 134 (TIGFGM) are selectivity filter 1. Residues 145-165 (FLIAYGLFGCAGTILFFNLFL) form a helical membrane-spanning segment. The Cytoplasmic portion of the chain corresponds to 166–212 (ERIISLLAFIMRACRERQLRRSGLLPATFRRGSALSEADSLAGWKPS). Residues 213 to 233 (VYHVLLILGLFAVLLSCCASA) form a helical membrane-spanning segment. An intramembrane region (pore-forming) is located at residues 243–263 (YVDSLYFCFVTFSTIGFGDLV). Residues threonine 256, isoleucine 257, glycine 258, and phenylalanine 259 each coordinate K(+). The tract at residues 256 to 261 (TIGFGD) is selectivity filter 2. A helical membrane pass occupies residues 282–302 (LFILLGVCCIYSLFNVISILI). Over 303–430 (KQVLNWMLRK…NRLAETSASR (128 aa)) the chain is Cytoplasmic.

This sequence belongs to the two pore domain potassium channel (TC 1.A.1.8) family. Homodimer. Heterodimer with KCNK13.

The protein localises to the cell membrane. It is found in the endoplasmic reticulum membrane. The catalysed reaction is K(+)(in) = K(+)(out). Its function is as follows. K(+) channel subunit that may homo- and heterodimerize to form functional channels with distinct regulatory and gating properties. Can heterodimerize with KCNK13 subunit to conduct K(+) outward rectifying currents at the plasma membrane. The homodimers are mainly retained in the endoplasmic reticulum compartment and may be targeted to the cell surface upon phosphorylation or other activation signals yet to be elucidated. The chain is Potassium channel subfamily K member 12 from Homo sapiens (Human).